We begin with the raw amino-acid sequence, 245 residues long: Nodulation protein G (245 aa).

11–35 (VTGASGAIGGAIARVLHAQGAIVGL) is an NAD(+) binding site. Ser-139 is a binding site for substrate. Residue Tyr-152 is the Proton acceptor of the active site.

Belongs to the short-chain dehydrogenases/reductases (SDR) family.

In terms of biological role, proposed to modify Nod factor fatty acyl chain. The sequence is that of Nodulation protein G (nodG) from Rhizobium meliloti (strain 1021) (Ensifer meliloti).